Here is a 273-residue protein sequence, read N- to C-terminus: Outer surface protein A (273 aa).

An N-terminal signal peptide occupies residues 1–16 (MKKYLLGIGLILALIA). The N-palmitoyl cysteine moiety is linked to residue C17. A lipid anchor (S-diacylglycerol cysteine) is attached at C17.

The protein belongs to the OspA lipoprotein family.

The protein localises to the cell outer membrane. The protein resides in the cell surface. The chain is Outer surface protein A from Borreliella burgdorferi (Lyme disease spirochete).